We begin with the raw amino-acid sequence, 75 residues long: Kappa-thalatoxin-Tas2a (75 aa).

The signal sequence occupies residues 1-22 (MKFQMIAAVLLIAFCLSVVVTA). A propeptide spanning residues 23-40 (RMELQDDEEMKNGSFQKR) is cleaved from the precursor. In terms of domain architecture, ShKT spans 43-75 (CIDTIPKSRCTAFQCKHSMKYRLSFCRKTCGTC). 3 disulfide bridges follow: Cys43–Cys75, Cys52–Cys68, and Cys57–Cys72.

The protein belongs to the sea anemone type 1 potassium channel toxin family. Type 1a subfamily.

It is found in the secreted. The protein resides in the nematocyst. Functionally, inhibits voltage-gated potassium channels (Kv) with higher potency for Kv1.1/KCNA1 and Kv1.3/KCNA3 (IC(50)=3.4 nM). The protein is Kappa-thalatoxin-Tas2a of Thalassianthus aster (Fuzzy-tipped anemone).